Reading from the N-terminus, the 695-residue chain is Follicle-stimulating hormone receptor (695 aa).

The signal sequence occupies residues 1-17 (MALFLVALLAFLSLGSG). 2 disulfides stabilise this stretch: Cys18–Cys25 and Cys23–Cys32. An LRRNT domain is found at 18–46 (CHHRLCHCSNGVFLCQDSKVTEMPSDLPR). The Extracellular segment spans residues 18–366 (CHHRLCHCSN…EDIMGYDILR (349 aa)). LRR repeat units follow at residues 48 to 70 (AVEL…SGFG), 71 to 93 (DLEK…VFSN), 96 to 118 (KLHE…AFQN), 121 to 142 (NLRY…HKIQ), 143 to 167 (SLQK…SFMG), 171 to 192 (ESMI…AFNG), 194 to 216 (QLDE…VFQG), 219 to 239 (GPVI…YGLE), and 240 to 262 (NLKK…EKFV). Residues Asn191 and Asn199 are each glycosylated (N-linked (GlcNAc...) asparagine). Disulfide bonds link Cys275/Cys346, Cys276/Cys292, Cys276/Cys356, and Cys292/Cys338. Residue Asn293 is glycosylated (N-linked (GlcNAc...) asparagine). Tyr335 carries the sulfotyrosine modification. Residues 367 to 387 (VLIWFISILAITGNILVLVIL) form a helical membrane-spanning segment. Residues 388-398 (ITSQYKLTVPR) lie on the Cytoplasmic side of the membrane. A helical membrane pass occupies residues 399–421 (FLMCNLAFADLCIGIYLLLIASV). At 422-443 (DVHTKSQYHNYAIDWQTGAGCD) the chain is on the extracellular side. Cys442 and Cys517 are joined by a disulfide. Residues 444 to 465 (AAGFFTVFASELSVYTLTAITL) form a helical membrane-spanning segment. Over 466-485 (ERWHTITHAMQLECKVHVRH) the chain is Cytoplasmic. A helical membrane pass occupies residues 486–508 (AASIMLVGWVFAFAVALFPIFGI). Residues 509 to 528 (SSYMKVSICLPMDIDSPLSQ) are Extracellular-facing. The helical transmembrane segment at 529 to 550 (LYVMSLLVLNVLAFVVICGCYT) threads the bilayer. At 551–573 (HIYLTVRNPNITSSSSDTKIAKR) the chain is on the cytoplasmic side. Residues 574–597 (MAMLIFTDFLCMAPISFFAISASL) form a helical membrane-spanning segment. Topologically, residues 598–608 (KVPLITVSKSK) are extracellular. Residues 609-630 (ILLVLFYPINSCANPFLYAIFT) form a helical membrane-spanning segment. At 631–695 (RNFRRDFFIL…LIPLRHLAKN (65 aa)) the chain is on the cytoplasmic side.

The protein belongs to the G-protein coupled receptor 1 family. FSH/LSH/TSH subfamily. As to quaternary structure, homotrimer. Functions as a homotrimer binding the FSH hormone heterodimer composed of CGA and FSHB. Interacts with ARRB2. Interacts with APPL2; interaction is independent of follicle stimulating hormone stimulation. Post-translationally, N-glycosylated; indirectly required for FSH-binding, possibly via a conformational change that allows high affinity binding of hormone. Sulfated. In terms of tissue distribution, isoform FSH-R3 is expressed in ovary and testis, but not in kidney (at protein level).

The protein localises to the cell membrane. In terms of biological role, g protein-coupled receptor for follitropin, the follicle-stimulating hormone. The activity of isoform FSH-R1 is mediated by G proteins which activate adenylate cyclase. Isoform FSH-R2 and isoform FSH-R3 also bind FSH, but this does not result in activation of adenylate cyclase. Isoform FSH-R3 may be involved in calcium signaling. Through cAMP production activates the downstream PI3K-AKT and ERK1/ERK2 signaling pathways. The protein is Follicle-stimulating hormone receptor (FSHR) of Ovis aries (Sheep).